The sequence spans 305 residues: Lipoyl synthase (305 aa).

The [4Fe-4S] cluster site is built by Cys41, Cys46, Cys52, Cys68, Cys72, Cys75, and Ser281. The Radical SAM core domain maps to 54 to 270 (GARRTATFMI…RKVAMDKGFK (217 aa)). Over residues 283-298 (HADEQVNEAAKEKQRQ) the composition is skewed to basic and acidic residues. The interval 283 to 305 (HADEQVNEAAKEKQRQGEAQLNS) is disordered.

It belongs to the radical SAM superfamily. Lipoyl synthase family. It depends on [4Fe-4S] cluster as a cofactor.

The protein resides in the cytoplasm. It carries out the reaction [[Fe-S] cluster scaffold protein carrying a second [4Fe-4S](2+) cluster] + N(6)-octanoyl-L-lysyl-[protein] + 2 oxidized [2Fe-2S]-[ferredoxin] + 2 S-adenosyl-L-methionine + 4 H(+) = [[Fe-S] cluster scaffold protein] + N(6)-[(R)-dihydrolipoyl]-L-lysyl-[protein] + 4 Fe(3+) + 2 hydrogen sulfide + 2 5'-deoxyadenosine + 2 L-methionine + 2 reduced [2Fe-2S]-[ferredoxin]. Its pathway is protein modification; protein lipoylation via endogenous pathway; protein N(6)-(lipoyl)lysine from octanoyl-[acyl-carrier-protein]. Catalyzes the radical-mediated insertion of two sulfur atoms into the C-6 and C-8 positions of the octanoyl moiety bound to the lipoyl domains of lipoate-dependent enzymes, thereby converting the octanoylated domains into lipoylated derivatives. The chain is Lipoyl synthase from Staphylococcus aureus (strain Mu3 / ATCC 700698).